A 327-amino-acid chain; its full sequence is GPI-linked NAD(P)(+)--arginine ADP-ribosyltransferase 1 (327 aa).

Positions 1–22 are cleaved as a signal peptide; that stretch reads MWVPAVANLLLLSLGLLEAIQA. 2 cysteine pairs are disulfide-bonded: Cys53–Cys277 and Cys174–Cys224. A glycan (N-linked (GlcNAc...) asparagine) is linked at Asn65. Positions 73–273 constitute a TR mART core domain; sequence KVYADGWALA…IYLKALGKRS (201 aa). Tyr121 and Arg179 together coordinate NAD(+). Active-site residues include Arg179 and Ser202. Ser233 is a binding site for NAD(+). The active site involves Glu240. The N-linked (GlcNAc...) asparagine glycan is linked to Asn253. Residue Ser295 is the site of GPI-anchor amidated serine attachment. Positions 296–327 are cleaved as a propeptide — removed in mature form; the sequence is ASAQERLSTAWSLLLLLAFLAVGPFPGSPGLF.

It belongs to the Arg-specific ADP-ribosyltransferase family. As to expression, primarily in skeletal and cardiac muscle.

It localises to the sarcoplasmic reticulum membrane. It carries out the reaction L-arginyl-[protein] + NAD(+) = N(omega)-(ADP-D-ribosyl)-L-arginyl-[protein] + nicotinamide + H(+). Functionally, has ADP-ribosyltransferase activity toward GLP1R. The polypeptide is GPI-linked NAD(P)(+)--arginine ADP-ribosyltransferase 1 (ART1) (Oryctolagus cuniculus (Rabbit)).